We begin with the raw amino-acid sequence, 226 residues long: Phosphoglycolate phosphatase (226 aa).

The Nucleophile role is filled by D9. Residues D9 and D11 each contribute to the Mg(2+) site. K150 lines the substrate pocket. Positions 173 and 177 each coordinate Mg(2+).

This sequence belongs to the archaeal SPP-like hydrolase family. Mg(2+) serves as cofactor.

It carries out the reaction 2-phosphoglycolate + H2O = glycolate + phosphate. Functionally, catalyzes the dephosphorylation of 2-phosphoglycolate. In Methanococcoides burtonii (strain DSM 6242 / NBRC 107633 / OCM 468 / ACE-M), this protein is Phosphoglycolate phosphatase.